The sequence spans 73 residues: Conotoxin CnIIIE (73 aa).

The first 19 residues, 1-19 (MSKLGVLLTICLLLFPLTA), serve as a signal peptide directing secretion. The propeptide occupies 20 to 49 (LPMDGDQSVDRPAERMQDDISSEQYPLFNQ). Intrachain disulfides connect C53–C72, C54–C70, and C60–C73.

It belongs to the conotoxin M superfamily. As to expression, expressed by the venom duct.

It localises to the secreted. Its function is as follows. Shows a paralytic effect in fish. The protein is Conotoxin CnIIIE of Conus consors (Singed cone).